The sequence spans 331 residues: Glyceraldehyde-3-phosphate dehydrogenase, cytosolic (331 aa).

NAD(+) contacts are provided by residues 12–13, Asp34, and Arg78; that span reads RI. D-glyceraldehyde 3-phosphate is bound by residues 149–151, Thr180, 209–210, and Arg232; these read SCT and TG. The active-site Nucleophile is the Cys150. Residue Asn314 participates in NAD(+) binding.

It belongs to the glyceraldehyde-3-phosphate dehydrogenase family. Homotetramer.

The protein localises to the cytoplasm. The enzyme catalyses D-glyceraldehyde 3-phosphate + phosphate + NAD(+) = (2R)-3-phospho-glyceroyl phosphate + NADH + H(+). It functions in the pathway carbohydrate degradation; glycolysis; pyruvate from D-glyceraldehyde 3-phosphate: step 1/5. The protein is Glyceraldehyde-3-phosphate dehydrogenase, cytosolic of Trypanosoma brucei brucei.